The following is a 475-amino-acid chain: Glutamyl-tRNA(Gln) amidotransferase subunit A (475 aa).

Catalysis depends on charge relay system residues Lys69 and Ser144. Ser168 serves as the catalytic Acyl-ester intermediate.

It belongs to the amidase family. GatA subfamily. Heterotrimer of A, B and C subunits.

The enzyme catalyses L-glutamyl-tRNA(Gln) + L-glutamine + ATP + H2O = L-glutaminyl-tRNA(Gln) + L-glutamate + ADP + phosphate + H(+). In terms of biological role, allows the formation of correctly charged Gln-tRNA(Gln) through the transamidation of misacylated Glu-tRNA(Gln) in organisms which lack glutaminyl-tRNA synthetase. The reaction takes place in the presence of glutamine and ATP through an activated gamma-phospho-Glu-tRNA(Gln). The protein is Glutamyl-tRNA(Gln) amidotransferase subunit A of Methanococcoides burtonii (strain DSM 6242 / NBRC 107633 / OCM 468 / ACE-M).